Consider the following 587-residue polypeptide: MDEEENSEINSVQARNEDVQLEDQSQSQGLQDRQVDAIEQAWNDAMPDEPSPPAEYAFHDPLAIVGEGGDAPEAMVEDVLQDDTASEGSHPSSDMSLESPGSEDDSDVQGLPNWMIPQNRLRSAVDMMVSQARNRDGGIAALLSGDNFLQRVRSMVFSQERRRSRTSEETSQEEAAEEPDDPPPQQPPLPPIDIGFDTNLPAEHSYFGNHLSRVPGVDYLEVGSVHHMLIFLHHHILFPGEVLPFMIDGQMFDDDMPGLDGLIFGVSFPRLQPPEDNPHKLYGVTCQIYERGESGRGLVFYKSRALQRIVINCDDIKGSPQYIARNPTNKCFSNVKILPEYFLPEPLQSVDMGSMARFRDIPSMRDKYRRFQLSTTTWPSDACQEYSFGSIVERARQRLESQKIDTMPKCPIQLSFWLVRNLHLTEKMMRLTFLTDSVNTRLQLIKSTFKDETLFFCRYCNSSLALCSDLFAMSKHGVQTQYCNPEGYIHETNTVYRVISHAIGYSGEPSTKFSWFPGYQWHIILCKFCAQHVGWEFKAVLPNLTPNVFFGLSGSSVRIGKASEYSPFNGTTYVVRNMLRMISSDME.

Disordered regions lie at residues 1-56, 78-113, and 157-195; these read MDEE…PAEY, DVLQ…GLPN, and FSQE…IDIG. 2 stretches are compositionally biased toward polar residues: residues 22-31 and 86-96; these read EDQSQSQGLQ and SEGSHPSSDMS. Positions 159–168 are enriched in basic and acidic residues; the sequence is QERRRSRTSE. The segment covering 170-181 has biased composition (acidic residues); it reads TSQEEAAEEPDD. The segment covering 182–191 has biased composition (pro residues); it reads PPPQQPPLPP. A Lon N-terminal domain is found at 227-453; the sequence is HMLIFLHHHI…LIKSTFKDET (227 aa). The 110-residue stretch at 452-561 folds into the CULT domain; the sequence is ETLFFCRYCN…LSGSSVRIGK (110 aa). Zn(2+) contacts are provided by C457, C460, C526, and C529.

Belongs to the CRBN family. In terms of assembly, likely a component of a DCX (DDB1-CUL4-X-box) protein ligase complex. May interact with pic/DDB1. Post-translationally, ubiquitinated.

It is found in the nucleus. It participates in protein modification; protein ubiquitination. Its function is as follows. Substrate recognition component of a DCX (DDB1-CUL4-X-box) E3 protein ligase complex that mediates the ubiquitination and subsequent proteasomal degradation of target proteins. Has an essential role in mediating growth by negatively regulating insulin signaling. It also has a role in maintaining presynaptic function in the neuromuscular junction synapses of third-instar larvae. In Drosophila simulans (Fruit fly), this protein is Protein cereblon.